The chain runs to 153 residues: Ribosome maturation factor RimP (153 aa).

It belongs to the RimP family.

The protein localises to the cytoplasm. Functionally, required for maturation of 30S ribosomal subunits. The polypeptide is Ribosome maturation factor RimP (Solibacter usitatus (strain Ellin6076)).